Reading from the N-terminus, the 368-residue chain is Probable dual-specificity RNA methyltransferase RlmN (368 aa).

Residue E100 is the Proton acceptor of the active site. A Radical SAM core domain is found at 106-344 (QHYGLSVCVT…CVVRQEHGTD (239 aa)). C113 and C349 form a disulfide bridge. C120, C124, and C127 together coordinate [4Fe-4S] cluster. S-adenosyl-L-methionine contacts are provided by residues 172–173 (GE), S204, 227–229 (SLH), and N305. Catalysis depends on C349, which acts as the S-methylcysteine intermediate.

This sequence belongs to the radical SAM superfamily. RlmN family. The cofactor is [4Fe-4S] cluster.

It localises to the cytoplasm. It catalyses the reaction adenosine(2503) in 23S rRNA + 2 reduced [2Fe-2S]-[ferredoxin] + 2 S-adenosyl-L-methionine = 2-methyladenosine(2503) in 23S rRNA + 5'-deoxyadenosine + L-methionine + 2 oxidized [2Fe-2S]-[ferredoxin] + S-adenosyl-L-homocysteine. The enzyme catalyses adenosine(37) in tRNA + 2 reduced [2Fe-2S]-[ferredoxin] + 2 S-adenosyl-L-methionine = 2-methyladenosine(37) in tRNA + 5'-deoxyadenosine + L-methionine + 2 oxidized [2Fe-2S]-[ferredoxin] + S-adenosyl-L-homocysteine. Functionally, specifically methylates position 2 of adenine 2503 in 23S rRNA and position 2 of adenine 37 in tRNAs. The sequence is that of Probable dual-specificity RNA methyltransferase RlmN from Streptococcus agalactiae serotype V (strain ATCC BAA-611 / 2603 V/R).